Here is a 416-residue protein sequence, read N- to C-terminus: uncharacterized protein (416 aa).

Cys63, Cys75, Cys78, and Cys152 together coordinate [4Fe-4S] cluster. Gln253, Phe280, Glu300, and Asp348 together coordinate S-adenosyl-L-methionine. The active-site Nucleophile is the Cys374.

It belongs to the class I-like SAM-binding methyltransferase superfamily. RNA M5U methyltransferase family.

This is an uncharacterized protein from Agrobacterium fabrum (strain C58 / ATCC 33970) (Agrobacterium tumefaciens (strain C58)).